The following is a 357-amino-acid chain: Fructose-1,6-bisphosphatase class 1 3 (357 aa).

Mg(2+) contacts are provided by E94, D116, L118, and D119. Substrate-binding positions include 119 to 122 and N211; that span reads DGSS. E283 serves as a coordination point for Mg(2+).

This sequence belongs to the FBPase class 1 family. As to quaternary structure, homotetramer. Mg(2+) serves as cofactor.

Its subcellular location is the cytoplasm. It catalyses the reaction beta-D-fructose 1,6-bisphosphate + H2O = beta-D-fructose 6-phosphate + phosphate. The protein operates within carbohydrate biosynthesis; Calvin cycle. This chain is Fructose-1,6-bisphosphatase class 1 3, found in Methylibium petroleiphilum (strain ATCC BAA-1232 / LMG 22953 / PM1).